The chain runs to 96 residues: MEQAPEDQGPQREPHNEWTLELLEELKNEAVRHFPRIWLHGLGQHIYETYGDTWAGVEAIIRILQQLLFIHFRIGCRHSRIGVTQQRRARNGASRS.

Residues 1–42 form a homooligomerization region; that stretch reads MEQAPEDQGPQREPHNEWTLELLEELKNEAVRHFPRIWLHGL. 3 positions are modified to phosphoserine; by host: S79, S94, and S96.

This sequence belongs to the HIV-1 VPR protein family. Homooligomer, may form homodimer. Interacts with p6-gag region of the Pr55 Gag precursor protein through a (Leu-X-X)4 motif near the C-terminus of the P6gag protein. Interacts with host UNG. May interact with host RAD23A/HHR23A. Interacts with host VPRBP/DCAF1, leading to hijack the CUL4A-RBX1-DDB1-DCAF1/VPRBP complex, mediating ubiquitination of host proteins such as TERT and ZGPAT and arrest of the cell cycle in G2 phase. Phosphorylated on several residues by host. These phosphorylations regulate VPR activity for the nuclear import of the HIV-1 pre-integration complex.

The protein resides in the virion. It is found in the host nucleus. The protein localises to the host extracellular space. During virus entry, plays a role in the transport of the viral pre-integration (PIC) complex to the host nucleus. This function is crucial for viral infection of non-dividing macrophages. May act directly at the nuclear pore complex, by binding nucleoporins phenylalanine-glycine (FG)-repeat regions. In terms of biological role, during virus replication, may deplete host UNG protein, and incude G2-M cell cycle arrest. Acts by targeting specific host proteins for degradation by the 26S proteasome, through association with the cellular CUL4A-DDB1 E3 ligase complex by direct interaction with host VPRPB/DCAF-1. Cell cycle arrest reportedly occurs within hours of infection and is not blocked by antiviral agents, suggesting that it is initiated by the VPR carried into the virion. Additionally, VPR induces apoptosis in a cell cycle dependent manner suggesting that these two effects are mechanistically linked. Detected in the serum and cerebrospinal fluid of AIDS patient, VPR may also induce cell death to bystander cells. The chain is Protein Vpr from Human immunodeficiency virus type 1 group M subtype B (isolate BRU/LAI) (HIV-1).